Reading from the N-terminus, the 589-residue chain is Heterogeneous nuclear ribonucleoprotein L (589 aa).

Over residues 1–16 the composition is skewed to basic residues; it reads MSRRLLPRAEKRRRRL. The tract at residues 1-100 is disordered; the sequence is MSRRLLPRAE…NYDDPHKTPA (100 aa). Residues 17-27 are compositionally biased toward basic and acidic residues; the sequence is EQRQQPDEQRR. Residues 38–54 show a composition bias toward gly residues; it reads AGGGGGGGRYYGGGSEG. At Ser52 the chain carries Phosphoserine. Glycyl lysine isopeptide (Lys-Gly) (interchain with G-Cter in SUMO2) cross-links involve residues Lys59 and Lys62. The span at 69 to 90 shows a compositional bias: gly residues; it reads QHGGGGGGGGGAGAAGGGGGGE. At Ser101 the chain carries Phosphoserine. The 75-residue stretch at 102–176 folds into the RRM 1 domain; sequence PVVHIRGLID…HPAFVNYSTS (75 aa). A Glycyl lysine isopeptide (Lys-Gly) (interchain with G-Cter in SUMO2) cross-link involves residue Lys136. Residue Ser185 is modified to Phosphoserine. The region spanning 193–270 is the RRM 2 domain; the sequence is SVLLFTILNP…CTLKIEYAKP (78 aa). Residue Lys269 is modified to N6-acetyllysine. Positions 284 to 301 are enriched in polar residues; that stretch reads DYTNPNLSGQGDPGSNPN. The interval 284-378 is disordered; sequence DYTNPNLSGQ…PPPPPEYGPH (95 aa). Ser291 and Ser298 each carry phosphoserine. A Glycyl lysine isopeptide (Lys-Gly) (interchain with G-Cter in SUMO2) cross-link involves residue Lys302. An asymmetric dimethylarginine mark is found at Arg354 and Arg358. Residues 364–375 are compositionally biased toward pro residues; it reads GHPPPPPPPPEY. Ser381 is modified (phosphoserine). RRM domains lie at 382–478 and 495–583; these read PVLM…KDFS and RIQH…LCFS. Ser544 carries the post-translational modification Phosphoserine; by CaMK4. Residue Lys568 forms a Glycyl lysine isopeptide (Lys-Gly) (interchain with G-Cter in SUMO2) linkage.

As to quaternary structure, identified in a IGF2BP1-dependent mRNP granule complex containing untranslated mRNAs. Interacts with HNRNPLL. Interacts with APEX1; the interaction is DNA-dependent. Component of a complex with SETD2. Interacts with ELAVL1. Part of a transcription inhibitory ribonucleoprotein complex composed at least of the circular RNA circZNF827, ZNF827 and HNRNPK. Interacts with CHD8 in an RNA-dependent manner. Post-translationally, several isoelectric forms of the L protein are probably the results of post-translational modifications. Phosphorylation at Ser-544 by CaMK4 enhances interaction with a CaMK4-responsive RNA element (CaRRE1), and prevents inclusion of the stress axis-regulated exon (STREX) of the KCNMA1 potassium channel transcripts upon membrane depolarization.

The protein resides in the nucleus. Its subcellular location is the nucleoplasm. The protein localises to the cytoplasm. Its function is as follows. Splicing factor binding to exonic or intronic sites and acting as either an activator or repressor of exon inclusion. Exhibits a binding preference for CA-rich elements. Component of the heterogeneous nuclear ribonucleoprotein (hnRNP) complexes and associated with most nascent transcripts. Associates, together with APEX1, to the negative calcium responsive element (nCaRE) B2 of the APEX2 promoter. As part of a ribonucleoprotein complex composed at least of ZNF827, HNRNPK and the circular RNA circZNF827 that nucleates the complex on chromatin, may negatively regulate the transcription of genes involved in neuronal differentiation. Regulates alternative splicing of a core group of genes involved in neuronal differentiation, likely by mediating H3K36me3-coupled transcription elongation and co-transcriptional RNA processing via interaction with CHD8. The sequence is that of Heterogeneous nuclear ribonucleoprotein L (HNRNPL) from Homo sapiens (Human).